The chain runs to 507 residues: Maturase K (507 aa).

This sequence belongs to the intron maturase 2 family. MatK subfamily.

It is found in the plastid. The protein localises to the chloroplast. In terms of biological role, usually encoded in the trnK tRNA gene intron. Probably assists in splicing its own and other chloroplast group II introns. The polypeptide is Maturase K (Euryale ferox (Gorgon plant)).